The following is a 359-amino-acid chain: UDP-N-acetylglucosamine--N-acetylmuramyl-(pentapeptide) pyrophosphoryl-undecaprenol N-acetylglucosamine transferase (359 aa).

UDP-N-acetyl-alpha-D-glucosamine contacts are provided by residues 15–17 (TGG), Asn-127, Arg-166, Ser-191, Ile-245, 264–269 (ALTVSE), and Gln-290.

Belongs to the glycosyltransferase 28 family. MurG subfamily.

It localises to the cell inner membrane. The enzyme catalyses di-trans,octa-cis-undecaprenyl diphospho-N-acetyl-alpha-D-muramoyl-L-alanyl-D-glutamyl-meso-2,6-diaminopimeloyl-D-alanyl-D-alanine + UDP-N-acetyl-alpha-D-glucosamine = di-trans,octa-cis-undecaprenyl diphospho-[N-acetyl-alpha-D-glucosaminyl-(1-&gt;4)]-N-acetyl-alpha-D-muramoyl-L-alanyl-D-glutamyl-meso-2,6-diaminopimeloyl-D-alanyl-D-alanine + UDP + H(+). It participates in cell wall biogenesis; peptidoglycan biosynthesis. Its function is as follows. Cell wall formation. Catalyzes the transfer of a GlcNAc subunit on undecaprenyl-pyrophosphoryl-MurNAc-pentapeptide (lipid intermediate I) to form undecaprenyl-pyrophosphoryl-MurNAc-(pentapeptide)GlcNAc (lipid intermediate II). The sequence is that of UDP-N-acetylglucosamine--N-acetylmuramyl-(pentapeptide) pyrophosphoryl-undecaprenol N-acetylglucosamine transferase from Pseudomonas putida (strain ATCC 47054 / DSM 6125 / CFBP 8728 / NCIMB 11950 / KT2440).